The following is a 618-amino-acid chain: 1-deoxy-D-xylulose-5-phosphate synthase (618 aa).

Thiamine diphosphate contacts are provided by residues His70 and 111-113; that span reads GHS. Asp142 provides a ligand contact to Mg(2+). Residues 143-144, Asn171, Tyr278, and Glu360 each bind thiamine diphosphate; that span reads GS. Residue Asn171 participates in Mg(2+) binding.

It belongs to the transketolase family. DXPS subfamily. As to quaternary structure, homodimer. Requires Mg(2+) as cofactor. The cofactor is thiamine diphosphate.

It carries out the reaction D-glyceraldehyde 3-phosphate + pyruvate + H(+) = 1-deoxy-D-xylulose 5-phosphate + CO2. It functions in the pathway metabolic intermediate biosynthesis; 1-deoxy-D-xylulose 5-phosphate biosynthesis; 1-deoxy-D-xylulose 5-phosphate from D-glyceraldehyde 3-phosphate and pyruvate: step 1/1. Its function is as follows. Catalyzes the acyloin condensation reaction between C atoms 2 and 3 of pyruvate and glyceraldehyde 3-phosphate to yield 1-deoxy-D-xylulose-5-phosphate (DXP). This Helicobacter pylori (strain G27) protein is 1-deoxy-D-xylulose-5-phosphate synthase.